A 313-amino-acid chain; its full sequence is Olfactory receptor 2B6 (313 aa).

At 1-27 (MSWANESITGEFVLLGFSDQPWLEFPL) the chain is on the extracellular side. A glycan (N-linked (GlcNAc...) asparagine) is linked at Asn-5. The helical transmembrane segment at 28 to 48 (FVVFLTSYIVTIFGNLNIILV) threads the bilayer. Over 49–57 (SHLDPKLHT) the chain is Cytoplasmic. A helical membrane pass occupies residues 58–78 (PMYFFLTNLSVIDLCYITCTV). Residues 79–97 (PQMLVNLRSIRKVISFGGC) lie on the Extracellular side of the membrane. Cys-97 and Cys-189 are oxidised to a cystine. Residues 98–118 (VVQLFMFLALGATECVLLPVM) traverse the membrane as a helical segment. Over 119–143 (SFDRFVAICRPLHYSVIMHQRLCLQ) the chain is Cytoplasmic. Residues 144 to 164 (LAAVSWIIGFGNSVWLSILTL) form a helical membrane-spanning segment. The Extracellular segment spans residues 165–200 (QLPRCGHYVIDHFLCEVPALLKLSCVDVTANEAELF). Residues 201-221 (FVSVFFHLTPLSLILTSYAFI) form a helical membrane-spanning segment. Residues 222 to 244 (ARAILKIQSAEGRQKAFGTCSSH) lie on the Cytoplasmic side of the membrane. A helical transmembrane segment spans residues 245–265 (LIVVSLFYGTALSVYFLPPSP). Residues 266–271 (HSKNRR) are Extracellular-facing. Residues 272-292 (KMVPLFYGIIAPMLNPLIYTL) form a helical membrane-spanning segment. Residues 293–313 (RNKEVKDAFKRLIKRVFLSKN) lie on the Cytoplasmic side of the membrane.

This sequence belongs to the G-protein coupled receptor 1 family.

It is found in the cell membrane. Functionally, odorant receptor. In Mus musculus (Mouse), this protein is Olfactory receptor 2B6.